The primary structure comprises 428 residues: ATP-dependent RNA helicase RhlB (428 aa).

A Q motif motif is present at residues 9–37 (QKFSDFALHPLVLEALEKKGFQHCTPIQA). The Helicase ATP-binding domain occupies 40-219 (LPLTLSGRDV…FEQMNNAEYV (180 aa)). ATP is bound at residue 53 to 60 (AQTGTGKT). Residues 165 to 168 (DEAD) carry the DEAD box motif. Positions 245–390 (RLLQTLIEEE…VSKYNSDALL (146 aa)) constitute a Helicase C-terminal domain. A disordered region spans residues 392-428 (DLPAPKRLARPRGGNGPRRNSAPRRGGAPRNNRKRSG). A compositionally biased stretch (low complexity) spans 408-421 (PRRNSAPRRGGAPR).

The protein belongs to the DEAD box helicase family. RhlB subfamily. As to quaternary structure, component of the RNA degradosome, which is a multiprotein complex involved in RNA processing and mRNA degradation.

The protein resides in the cytoplasm. It carries out the reaction ATP + H2O = ADP + phosphate + H(+). DEAD-box RNA helicase involved in RNA degradation. Has RNA-dependent ATPase activity and unwinds double-stranded RNA. In Serratia proteamaculans (strain 568), this protein is ATP-dependent RNA helicase RhlB.